The sequence spans 518 residues: ATP synthase subunit alpha (518 aa).

Position 170–177 (170–177 (GDRQTGKT)) interacts with ATP.

Belongs to the ATPase alpha/beta chains family. F-type ATPases have 2 components, CF(1) - the catalytic core - and CF(0) - the membrane proton channel. CF(1) has five subunits: alpha(3), beta(3), gamma(1), delta(1), epsilon(1). CF(0) has three main subunits: a(1), b(2) and c(9-12). The alpha and beta chains form an alternating ring which encloses part of the gamma chain. CF(1) is attached to CF(0) by a central stalk formed by the gamma and epsilon chains, while a peripheral stalk is formed by the delta and b chains.

The protein localises to the cell membrane. It carries out the reaction ATP + H2O + 4 H(+)(in) = ADP + phosphate + 5 H(+)(out). Produces ATP from ADP in the presence of a proton gradient across the membrane. The alpha chain is a regulatory subunit. The chain is ATP synthase subunit alpha from Mycoplasmoides gallisepticum (strain R(low / passage 15 / clone 2)) (Mycoplasma gallisepticum).